Reading from the N-terminus, the 333-residue chain is Ketoreductase sphI (333 aa).

Tyr167 provides a ligand contact to NADP(+).

It belongs to the NAD(P)-dependent epimerase/dehydratase family. Dihydroflavonol-4-reductase subfamily.

Its function is as follows. Ketoreductase; part of the gene cluster that mediates the biosynthesis of sphingofungins, bioactive molecules acting as sphingolipid inhibitors via inhibiting serine palmitoyl transferase (SPT). Does not seem to be involved in any biosynthetic process leading to the production of sphingofungins, but might be connected to a regulation or resistance mechanism. The protein is Ketoreductase sphI of Aspergillus fumigatus (strain CBS 144.89 / FGSC A1163 / CEA10) (Neosartorya fumigata).